Reading from the N-terminus, the 873-residue chain is Leucine--tRNA ligase (873 aa).

Residues 43–53 carry the 'HIGH' region motif; that stretch reads PYPSGSLHMGH. The 'KMSKS' region signature appears at 624-628; the sequence is TMSKS. Residue Lys627 coordinates ATP.

It belongs to the class-I aminoacyl-tRNA synthetase family.

Its subcellular location is the cytoplasm. The catalysed reaction is tRNA(Leu) + L-leucine + ATP = L-leucyl-tRNA(Leu) + AMP + diphosphate. This is Leucine--tRNA ligase from Synechococcus sp. (strain JA-3-3Ab) (Cyanobacteria bacterium Yellowstone A-Prime).